A 131-amino-acid chain; its full sequence is Small ribosomal subunit protein uS8 (131 aa).

It belongs to the universal ribosomal protein uS8 family. In terms of assembly, part of the 30S ribosomal subunit. Contacts proteins S5 and S12.

In terms of biological role, one of the primary rRNA binding proteins, it binds directly to 16S rRNA central domain where it helps coordinate assembly of the platform of the 30S subunit. This is Small ribosomal subunit protein uS8 from Chlorobium chlorochromatii (strain CaD3).